A 639-amino-acid chain; its full sequence is Polypeptide N-acetylgalactosaminyltransferase 15 (639 aa).

Residues 1–11 (MLLRKRYRHRP) are Cytoplasmic-facing. The helical; Signal-anchor for type II membrane protein transmembrane segment at 12-34 (CRLQFLLLLLMLGCVLMMVAMLH) threads the bilayer. Over 35-639 (PPHHTLHQTV…FDQINAVDER (605 aa)) the chain is Lumenal. Positions 106-155 (RNQSQGRRGGSYRLIKQPRRQDKEAPKRDWGADEDGEVSEEEELTPFSLD) are disordered. The N-linked (GlcNAc...) asparagine glycan is linked to asparagine 107. Residues 124–136 (RRQDKEAPKRDWG) show a composition bias toward basic and acidic residues. The segment covering 137 to 149 (ADEDGEVSEEEEL) has biased composition (acidic residues). 5 disulfide bridges follow: cysteine 181-cysteine 412, cysteine 403-cysteine 482, cysteine 517-cysteine 536, cysteine 562-cysteine 575, and cysteine 603-cysteine 620. The tract at residues 190–299 (LPTASVILCF…PGWLEPLLSR (110 aa)) is catalytic subdomain A. Substrate-binding residues include aspartate 231 and arginine 260. Mn(2+) contacts are provided by aspartate 283, histidine 285, and histidine 417. The interval 358–420 (PIRSPVVPGE…PCSRVGHIYQ (63 aa)) is catalytic subdomain B. Residues 504 to 631 (SFSGKLHNTG…GKARQQWRFD (128 aa)) form the Ricin B-type lectin domain. Residue asparagine 574 is glycosylated (N-linked (GlcNAc...) asparagine).

This sequence belongs to the glycosyltransferase 2 family. GalNAc-T subfamily. Mn(2+) serves as cofactor. As to expression, widely expressed. Highly expressed in small intestine, placenta, spleen, cerebral cortex and ovary. Expressed at intermediate level in uterus, mammary gland, stomach, cerebellum and whole brain. Weakly expressed in fetal brain, bone marrow, thyroid gland, thymus, heart, skeletal muscle, lung, liver, colon, pancreas, kidney and testis. Not expressed in leukocyte. Expressed in both normal and osteoarthritic cartilage. Expressed at low level in chondrocytes in all zones of both normal and osteoarthritic cartilage.

The protein resides in the golgi apparatus membrane. The enzyme catalyses L-seryl-[protein] + UDP-N-acetyl-alpha-D-galactosamine = a 3-O-[N-acetyl-alpha-D-galactosaminyl]-L-seryl-[protein] + UDP + H(+). The catalysed reaction is L-threonyl-[protein] + UDP-N-acetyl-alpha-D-galactosamine = a 3-O-[N-acetyl-alpha-D-galactosaminyl]-L-threonyl-[protein] + UDP + H(+). It participates in protein modification; protein glycosylation. Catalyzes the initial reaction in O-linked oligosaccharide biosynthesis, the transfer of an N-acetyl-D-galactosamine residue to a serine or threonine residue on the protein receptor. Although it displays a much weaker activity toward all substrates tested compared to GALNT2, it is able to transfer up to seven GalNAc residues to the Muc5AC peptide, suggesting that it can fill vicinal Thr/Ser residues in cooperation with other GALNT proteins. Prefers Muc1a as substrate. This Homo sapiens (Human) protein is Polypeptide N-acetylgalactosaminyltransferase 15 (GALNT15).